The following is a 561-amino-acid chain: Bifunctional NAD(P)H-hydrate repair enzyme (561 aa).

Positions 1-241 are NAD(P)H-hydrate epimerase; the sequence is MLSRISERCT…WMIAAERMDA (241 aa). The YjeF N-terminal domain maps to 29 to 235; the sequence is LRDAEPAAAA…SLGLEEWMIA (207 aa). The segment at 77-81 is NADPHX 1; for epimerase activity; the sequence is NNGGD. K(+) contacts are provided by N78 and D145. The segment at 149–155 is NADPHX 1; for epimerase activity; it reads GTGISGP. The (6S)-NADPHX site is built by Y160 and D178. A K(+)-binding site is contributed by S181. The region spanning 249–548 is the YjeF C-terminal domain; that stretch reads LGDVYGYFST…PRIPFIVNAS (300 aa). Residues 249–561 are ADP-dependent (S)-NAD(P)H-hydrate dehydratase; the sequence is LGDVYGYFST…SATQQRPSGL (313 aa). A (6S)-NADPHX-binding site is contributed by G351. The tract at residues 417–423 is NADPHX 2; for dehydratase activity; the sequence is HPGEAAR. ADP is bound by residues 454 to 458 and 475 to 484; these read KGPGT and NAGMASGGMG. D485 contributes to the (6S)-NADPHX binding site.

It in the N-terminal section; belongs to the NnrE/AIBP family. This sequence in the C-terminal section; belongs to the NnrD/CARKD family. The cofactor is K(+).

It carries out the reaction (6S)-NADHX + ADP = AMP + phosphate + NADH + H(+). The catalysed reaction is (6S)-NADPHX + ADP = AMP + phosphate + NADPH + H(+). The enzyme catalyses (6R)-NADHX = (6S)-NADHX. It catalyses the reaction (6R)-NADPHX = (6S)-NADPHX. Bifunctional enzyme that catalyzes the epimerization of the S- and R-forms of NAD(P)HX and the dehydration of the S-form of NAD(P)HX at the expense of ADP, which is converted to AMP. This allows the repair of both epimers of NAD(P)HX, a damaged form of NAD(P)H that is a result of enzymatic or heat-dependent hydration. In Leishmania braziliensis, this protein is Bifunctional NAD(P)H-hydrate repair enzyme.